The sequence spans 309 residues: NADH-cytochrome b5 reductase 1 (309 aa).

A helical membrane pass occupies residues 30–50; sequence FVPYAVAVTAILAGLKLFTGG. Residues 60-165 enclose the FAD-binding FR-type domain; sequence TEFQEFVLKE…RGPKGAMVYT (106 aa). FAD contacts are provided by residues 145–160 and 171–208; these read TTLK…GPKG and HIGM…KLDL.

This sequence belongs to the flavoprotein pyridine nucleotide cytochrome reductase family. Monomer. Component of the 2-(3-amino-3-carboxypropyl)histidine synthase complex composed of dph1, dph2, dph3 and a NADH-dependent reductase, predominantly cbr1. The cofactor is FAD.

It localises to the mitochondrion outer membrane. The enzyme catalyses 2 Fe(III)-[cytochrome b5] + NADH = 2 Fe(II)-[cytochrome b5] + NAD(+) + H(+). It catalyses the reaction 2 Fe(3+)-[Dph3] + NADH = 2 Fe(2+)-[Dph3] + NAD(+) + H(+). It functions in the pathway protein modification; peptidyl-diphthamide biosynthesis. In terms of biological role, NADH-dependent reductase for dph3 and cytochrome b5. Required for the first step of diphthamide biosynthesis, a post-translational modification of histidine which occurs in elongation factor 2. Dph1 and dph2 transfer a 3-amino-3-carboxypropyl (ACP) group from S-adenosyl-L-methionine (SAM) to a histidine residue, the reaction is assisted by a reduction system comprising dph3 and a NADH-dependent reductase, predominantly cbr1. By reducing dph3, also involved in the formation of the tRNA wobble base modification mcm5s 2U (5-methoxycarbonylmethyl-2-thiouridine), mediated by the elongator complex. The cytochrome b5/NADH cytochrome b5 reductase electron transfer system supports the catalytic activity of several sterol biosynthetic enzymes. This Aspergillus fumigatus (strain ATCC MYA-4609 / CBS 101355 / FGSC A1100 / Af293) (Neosartorya fumigata) protein is NADH-cytochrome b5 reductase 1 (cbr1).